We begin with the raw amino-acid sequence, 429 residues long: Dihydroorotase (429 aa).

Residues His62 and His64 each contribute to the Zn(2+) site. Substrate-binding positions include 64-66 (HFR) and Asn96. Asp154, His181, and His234 together coordinate Zn(2+). Asn280 serves as a coordination point for substrate. Position 307 (Asp307) interacts with Zn(2+). Residue Asp307 is part of the active site. Substrate is bound by residues His311 and 325–326 (FG).

Belongs to the metallo-dependent hydrolases superfamily. DHOase family. Class I DHOase subfamily. The cofactor is Zn(2+).

The catalysed reaction is (S)-dihydroorotate + H2O = N-carbamoyl-L-aspartate + H(+). The protein operates within pyrimidine metabolism; UMP biosynthesis via de novo pathway; (S)-dihydroorotate from bicarbonate: step 3/3. In terms of biological role, catalyzes the reversible cyclization of carbamoyl aspartate to dihydroorotate. This Latilactobacillus sakei subsp. sakei (strain 23K) (Lactobacillus sakei subsp. sakei) protein is Dihydroorotase.